The primary structure comprises 996 residues: Poly [ADP-ribose] polymerase (996 aa).

A DNA-binding region spans residues 1 to 369 (MEIDLPFKVE…TSTILKNISL (369 aa)). 2 consecutive PARP-type zinc fingers follow at residues 7–89 (FKVE…DNCT) and 114–203 (FGIE…PVIK). Residues Cys19, Cys22, His51, Cys54, Cys126, Cys129, His161, and Cys164 each coordinate Zn(2+). Short sequence motifs (nuclear localization signal) lie at residues 211–214 (KKAK) and 232–235 (KIKK). The 139-residue stretch at 220–358 (EEDAASIKEL…EVRAIRYIPP (139 aa)) folds into the PADR1 zinc-binding domain. The interval 286-329 (GALLPCTDCKGRQLLFHKSGYLCNGDLTEWTKCTKLLKEPERKS) is zinc ribbon. Zn(2+)-binding residues include Cys291, Cys294, Cys308, and Cys318. The tract at residues 370–507 (KKGDELDGPK…SIYTKSVPKS (138 aa)) is automodification domain. Residues 382–473 (RERPPLYNIE…AGAINYISSM (92 aa)) enclose the BRCT domain. A WGR domain is found at 527 to 625 (VAHVYVSRNK…ENFVKVAGRM (99 aa)). Positions 647 to 764 (KSKLPLSVQD…EIECAYSLLQ (118 aa)) constitute a PARP alpha-helical domain. Residues 773 to 996 (NPIDKHYEQL…YMLRMNFKYK (224 aa)) enclose the PARP catalytic domain.

The protein belongs to the ARTD/PARP family.

The protein localises to the nucleus. It carries out the reaction NAD(+) + (ADP-D-ribosyl)n-acceptor = nicotinamide + (ADP-D-ribosyl)n+1-acceptor + H(+).. It catalyses the reaction L-aspartyl-[protein] + NAD(+) = 4-O-(ADP-D-ribosyl)-L-aspartyl-[protein] + nicotinamide. The enzyme catalyses L-glutamyl-[protein] + NAD(+) = 5-O-(ADP-D-ribosyl)-L-glutamyl-[protein] + nicotinamide. Poly-ADP-ribosyltransferase that mediates poly-ADP-ribosylation of proteins and plays a key role in DNA repair. Mainly mediates glutamate and aspartate ADP-ribosylation of target proteins: the ADP-D-ribosyl group of NAD(+) is transferred to the acceptor carboxyl group of glutamate and aspartate residues and further ADP-ribosyl groups are transferred to the 2'-position of the terminal adenosine moiety, building up a polymer with an average chain length of 20-30 units. The protein is Poly [ADP-ribose] polymerase of Sarcophaga peregrina (Flesh fly).